Reading from the N-terminus, the 332-residue chain is MGFGDFTGLCRMAPLPLCSSVGPITSIASGVGIEPDCYARNIEVANTIIFQGAASAMHIIALVMTVVMILHVRGKFTAVGRKEITTFFYLYMLLTFLSLCVDAGVVPPGSAPYPYFVAVQAGLASATVTCLMINGFVGFQLYEDGTPLSLWMMRLCSAAAFVISFLVALATFKTWAGLGPTNTIGLFVVLYLLNAVQLFVYVVLQVLLVMRTLHDRWPLGDIAFGMFFFVAGQVILYAASAPICKAISHYLDGLFFATTCNLLAVMMVYKYWDSITKEDLEFSVGTRMNNWEVKDLLPEEDRRATVYHDDPYGQSTAYDNSYSPSPNRHSRY.

A run of 7 helical transmembrane segments spans residues 52–72 (GAAS…ILHV), 87–107 (FFYL…GVVP), 116–136 (FVAV…INGF), 158–178 (AAAF…WAGL), 184–204 (IGLF…YVVL), 219–239 (LGDI…LYAA), and 249–269 (HYLD…MMVY). The interval 309–332 (DDPYGQSTAYDNSYSPSPNRHSRY) is disordered. Polar residues predominate over residues 313–332 (GQSTAYDNSYSPSPNRHSRY).

The protein belongs to the CHS7 family. Interacts with CHS3.

The protein resides in the endoplasmic reticulum membrane. Its function is as follows. Chaperone required for the export of the chitin synthase CHS3 from the endoplasmic reticulum. This chain is Chitin synthase export chaperone (CHS7), found in Chaetomium globosum (strain ATCC 6205 / CBS 148.51 / DSM 1962 / NBRC 6347 / NRRL 1970) (Soil fungus).